The sequence spans 82 residues: Small ribosomal subunit protein bS18 (82 aa).

A disordered region spans residues 1 to 20 (MAEVSSSTVRRPFHRRRKTC).

This sequence belongs to the bacterial ribosomal protein bS18 family. Part of the 30S ribosomal subunit. Forms a tight heterodimer with protein bS6.

Binds as a heterodimer with protein bS6 to the central domain of the 16S rRNA, where it helps stabilize the platform of the 30S subunit. This is Small ribosomal subunit protein bS18 from Allorhizobium ampelinum (strain ATCC BAA-846 / DSM 112012 / S4) (Agrobacterium vitis (strain S4)).